We begin with the raw amino-acid sequence, 542 residues long: MIFKNTRRSYQIIATFLRYGIDEIIPDIPFTYSARLTRKAFFWLQNEHKDQPFGVRLRLALQELGPVWIKLGQMLATRRDLFEPALADQLALLQDSVAPFDGKLARKIIEQALGNTLETWFDDFDEQALASASIAQVHTATFNKNQPLAGQNVVLKVIRPDIEHIIKADIALMYQLAKLIPYLSDDAKRLRATEVVREYEKTLLDELDLTREMANAIRLRNNFENSEMLYVPAMYPDFCHKNVIVMERIYGIPVSDIATLTENGTNMKLLAERGVQVFFTQVFRDSFFHADMHAGNIFVNPNHPEDPQYIGIDCGIVGTLNQNDKRYLAESFVAFFNRDYRRVALMHIESGWTPADTDVDAFEEAFRTVCEPIFAKPLAEISFGQVLLNLFNVARQFNMEVQPQLVLLQKTLLYIEGLGRQVYPALDLWQTAKPFLQKWLDQQVGFKAILRDLKQQAPQFREHFAQFPEAVFNALQQQKHINYRLAELNKTLQSQADNKTYNVKMIIMGSIILSLLWQFNSLPLWLSLPILTMLCLALCRRK.

The region spanning 123-505 (DFDEQALASA…ADNKTYNVKM (383 aa)) is the Protein kinase domain. ATP contacts are provided by residues 129–137 (LASASIAQV) and lysine 156. The active-site Proton acceptor is the aspartate 291. Residues 506-526 (IIMGSIILSLLWQFNSLPLWL) form a helical membrane-spanning segment.

It belongs to the ABC1 family. UbiB subfamily.

It is found in the cell inner membrane. Its pathway is cofactor biosynthesis; ubiquinone biosynthesis [regulation]. Functionally, is probably a protein kinase regulator of UbiI activity which is involved in aerobic coenzyme Q (ubiquinone) biosynthesis. This is Probable protein kinase UbiB from Haemophilus ducreyi (strain 35000HP / ATCC 700724).